A 344-amino-acid chain; its full sequence is NDP-polyphosphate phosphotransferase 2 (344 aa).

Positions 1–60 (METAKPIAPQKDSKANGVDATDPVVKVASPQDPAGDAKVEDATAPVAEVEPRTPRNRRLP) are disordered.

This sequence belongs to the polyphosphate kinase 2 (PPK2) family. Class I subfamily. Requires Mg(2+) as cofactor.

It carries out the reaction [phosphate](n) + ATP = [phosphate](n+1) + ADP. The catalysed reaction is [phosphate](n) + CTP = [phosphate](n+1) + CDP. The enzyme catalyses [phosphate](n) + GTP = [phosphate](n+1) + GDP. It catalyses the reaction [phosphate](n) + UTP = [phosphate](n+1) + UDP. Uses inorganic polyphosphate (polyP) as a donor to convert NDP to NTP. PolyP hydrolysis is slightly faster with ADP, but it can also use GDP, CDP and UDP. The polypeptide is NDP-polyphosphate phosphotransferase 2 (Ruegeria pomeroyi (strain ATCC 700808 / DSM 15171 / DSS-3) (Silicibacter pomeroyi)).